Here is a 565-residue protein sequence, read N- to C-terminus: Membrane protein insertase YidC (565 aa).

6 helical membrane passes run 6-26 (VLLI…WGKN), 348-368 (LMAL…SLLH), 370-390 (WGWA…PLSA), 437-457 (GGCF…WVLV), 479-499 (PYFI…KLTP), and 516-536 (PLIF…YWVI).

This sequence belongs to the OXA1/ALB3/YidC family. Type 1 subfamily. In terms of assembly, interacts with the Sec translocase complex via SecD. Specifically interacts with transmembrane segments of nascent integral membrane proteins during membrane integration.

The protein localises to the cell inner membrane. In terms of biological role, required for the insertion and/or proper folding and/or complex formation of integral membrane proteins into the membrane. Involved in integration of membrane proteins that insert both dependently and independently of the Sec translocase complex, as well as at least some lipoproteins. Aids folding of multispanning membrane proteins. The sequence is that of Membrane protein insertase YidC from Xylella fastidiosa (strain 9a5c).